Consider the following 989-residue polypeptide: Serine-repeat antigen protein 5 (989 aa).

The first 16 residues, 1-16 (MKSYISLFFILCVIFN), serve as a signal peptide directing secretion. Disordered stretches follow at residues 26 to 91 (SQTG…EKQD) and 165 to 245 (LPSN…RNLQ). 3 stretches are compositionally biased toward low complexity: residues 52-87 (QGST…STSS), 167-180 (SNGT…STGT), and 191-225 (SSSS…SSSS). Phosphoserine is present on Ser-167. An N-linked (GlcNAc...) asparagine glycan is attached at Asn-168. Residues 208-245 (SSSSSSSSSSSSSSSSSSESLPANGPDSPTVKPPRNLQ) are interaction with PTKL. Asn-310 carries an N-linked (GlcNAc...) asparagine glycan. Positions 365 to 382 (YKYLSEDIVSNFKEIKAE) are interaction with host VTN. A disulfide bridge links Cys-437 with Cys-489. Position 541 is a phosphothreonine (Thr-541). 5 disulfide bridges follow: Cys-559/Cys-564, Cys-573/Cys-602, Cys-585/Cys-628, Cys-619/Cys-664, and Cys-747/Cys-801. The thiol-protease-like stretch occupies residues 571 to 989 (NNCISNLQVE…TNNECYFCYV (419 aa)). Catalysis depends on residues His-754 and Asn-779. N-linked (GlcNAc...) asparagine glycosylation is present at Asn-820. Residues 835 to 878 (KASPEFYHNLYFKNFNVGKKNLFSEKEDNENNKKLGNNYIIFGQ) constitute a propeptide, inhibition peptide. Position 858 is a phosphoserine (Ser-858).

It belongs to the peptidase C1 family. May interact (via C-terminus) with PTKL (via SAM domain). In terms of assembly, interacts (via C-terminus) with human VTN (via hemopexin repeat 2); may form heterotetramers of two VTN and SERA5 P47 heterodimers; the interaction may protect merozoites from phagocytosis by host monocytes; VTN glycosylation appears to be dispensable for the interaction. As to quaternary structure, monomer. Interacts with kinase CPK1/CDPK1 at the schizont stage. Phosphorylation by CPK1/CDPK1 increases SERA5 protease activity towards a synthetic peptide in vitro. In terms of processing, just prior to merozoite egress from host erythrocytes, proteolytically cleaved into multiple fragments. Cleaved by SUB1 into p47 and p73, p73 is further cleaved by SUB1 into p56 and p18 and p56 is further processed into p50 by an unidentified protease. p47 remains covalently associated with p18 via disulfide bond. p47 can be processed into p25n and p25c by SUB1. p25c and p25n remain associated with p18. Proteolytic processing is essential for merozoite egress from host erythrocytes. The cleavage of the propeptide to produce p50 is necessary for protease activity and to promote merozoite egress.

The protein localises to the parasitophorous vacuole. It localises to the secreted. The protein resides in the cell membrane. In terms of biological role, plays an essential role during the asexual blood stage development by controlling the kinetics of merozoite egress from host erythrocytes. Specifically, prevents premature rupture of the parasitophorous vacuole and host erythrocyte membranes. May prevent merozoite phagocytosis by host monocytes via interaction with host VTN at the merozoite surface. Plays a role in parasite growth. Functionally, protease activity is controversial. In Plasmodium falciparum (isolate CDC / Honduras), this protein is Serine-repeat antigen protein 5.